The chain runs to 355 residues: Uroporphyrinogen decarboxylase (355 aa).

Substrate-binding positions include 27-31 (RQAGR), Phe-46, Asp-77, Tyr-154, Ser-209, and His-327.

This sequence belongs to the uroporphyrinogen decarboxylase family. As to quaternary structure, homodimer.

The protein localises to the cytoplasm. It carries out the reaction uroporphyrinogen III + 4 H(+) = coproporphyrinogen III + 4 CO2. It functions in the pathway porphyrin-containing compound metabolism; protoporphyrin-IX biosynthesis; coproporphyrinogen-III from 5-aminolevulinate: step 4/4. Its function is as follows. Catalyzes the decarboxylation of four acetate groups of uroporphyrinogen-III to yield coproporphyrinogen-III. This chain is Uroporphyrinogen decarboxylase, found in Nitrosomonas europaea (strain ATCC 19718 / CIP 103999 / KCTC 2705 / NBRC 14298).